The sequence spans 368 residues: Probable auxin efflux carrier component 5b (368 aa).

10 helical membrane passes run 7-27 (VYKV…GYGS), 39-59 (CDAV…FDFA), 71-91 (VLAA…ACAA), 114-134 (CITG…VPLL), 145-165 (LIVQ…LLAF), 227-247 (VLGV…PSII), 251-271 (VLIM…LFMA), 286-306 (LGMA…AFAL), 312-332 (LLRL…FVFA), and 347-367 (IFGT…LGFI).

Belongs to the auxin efflux carrier (TC 2.A.69.1) family. In terms of tissue distribution, expressed at low levels in roots and shoot apex.

The protein resides in the membrane. Its function is as follows. May act as a component of the auxin efflux carrier. This is Probable auxin efflux carrier component 5b from Oryza sativa subsp. japonica (Rice).